The following is a 752-amino-acid chain: Zinc finger protein 184 (752 aa).

The 72-residue stretch at 28–99 (VTFKDVIVDF…EPSIPVGTPG (72 aa)) folds into the KRAB domain. 3 positions are modified to phosphoserine: S117, S122, and S200. K207 is covalently cross-linked (Glycyl lysine isopeptide (Lys-Gly) (interchain with G-Cter in SUMO2)). 19 consecutive C2H2-type zinc fingers follow at residues 223 to 245 (CKCN…QRTH), 251 to 273 (YKCN…QRIH), 279 to 301 (YKCD…QRIH), 307 to 329 (YKCD…QRIH), 335 to 357 (YTCN…QKIH), 363 to 385 (FKCD…QKIH), 391 to 413 (YKCN…HMIH), 419 to 441 (YECN…QKTH), 447 to 469 (YDCA…LKIH), 475 to 497 (YKCN…RRIH), 503 to 525 (FECS…QKTH), 531 to 553 (YECK…ERIH), 559 to 581 (YQCH…RKIH), 587 to 609 (YKCN…KRIH), 615 to 637 (YECA…QKTH), 643 to 665 (YHCN…QRIH), 671 to 693 (YKCN…QNTH), 699 to 721 (YNCN…QRIH), and 727 to 749 (FGCN…QRLH).

Belongs to the krueppel C2H2-type zinc-finger protein family.

The protein resides in the nucleus. May be involved in transcriptional regulation. In Bos taurus (Bovine), this protein is Zinc finger protein 184 (ZNF184).